A 541-amino-acid polypeptide reads, in one-letter code: Protein wntless homolog (541 aa).

Residues 1-15 (MAGAIIENMSTKKLC) lie on the Cytoplasmic side of the membrane. The chain crosses the membrane as a helical span at residues 16–36 (IVGGILLVFQIIAFLVGGLIA). At 37–232 (PGPTTAVSYM…GIHQNGGFTK (196 aa)) the chain is on the lumenal side. The tract at residues 101-232 (MEMSPWFQFM…GIHQNGGFTK (132 aa)) is interaction with Wnt proteins. Residues 233-253 (VWFAMKTFLTPSIFIIMVWYW) traverse the membrane as a helical segment. At 254 to 268 (RRITMMSRPPVLLEK) the chain is on the cytoplasmic side. Residues 269 to 289 (VIFALGISMTFINIPVEWFSI) form a helical membrane-spanning segment. The Lumenal portion of the chain corresponds to 290 to 303 (GFDWTWMLLFGDIR). The chain crosses the membrane as a helical span at residues 304-324 (QGIFYAMLLSFWIIFCGEHMM). The Cytoplasmic segment spans residues 325–331 (DQHERNH). The chain crosses the membrane as a helical span at residues 332-352 (IAGYWKQVGPIAVGSFCLFIF). Residues 353-380 (DMCERGVQLTNPFYSIWTTDIGTELAMA) lie on the Lumenal side of the membrane. A helical transmembrane segment spans residues 381 to 401 (FIIVAGICLCLYFLFLCFMVF). Residues 402 to 431 (QVFRNISGKQSSLPAMSKVRRLHYEGLIFR) lie on the Cytoplasmic side of the membrane. A helical transmembrane segment spans residues 432 to 452 (FKFLMLITLACAAMTVIFFIV). At 453–471 (SQVTEGHWKWGGVTVQVNS) the chain is on the lumenal side. The chain crosses the membrane as a helical span at residues 472 to 492 (AFFTGIYGMWNLYVFALMFLY). Residues 493 to 541 (APSHKNYGEDQSNGDLGVHSGEELQLTTTITHVDGPTEIYKLTRKEAQE) are Cytoplasmic-facing.

The protein belongs to the wntless family. Interacts with WNT3A. Interacts with WNT1, WNT3 and WNT5A. Post-translationally, N-glycosylated.

It localises to the golgi apparatus membrane. The protein resides in the cytoplasmic vesicle membrane. Its subcellular location is the cell membrane. It is found in the endoplasmic reticulum membrane. The protein localises to the early endosome membrane. In terms of biological role, regulates Wnt proteins sorting and secretion in a feedback regulatory mechanism. This reciprocal interaction plays a key role in the regulation of expression, subcellular location, binding and organelle-specific association of Wnt proteins. Plays also an important role in establishment of the anterior-posterior body axis formation during development. This chain is Protein wntless homolog (WLS), found in Homo sapiens (Human).